A 293-amino-acid polypeptide reads, in one-letter code: MATNIGMMDSAYFVGRNEILSWINDRLHLNLSRIEEAASGAVQCQMLDMTFPGVVPMHKVNFEAKNEYEMIQNYKVMQEVFTKLKITKPLEVNRLVKGRPLDNLEFLQWLKRFCDSINGGIMNENYNPVERRSRGGREKSVKGSSKISKSLQTNNMHHPPVATSNKPAGPKQAKSHGIGGGSNSSAEVQALSKEVEDLKVSVDLLEKERDFYFSKLRDIEILCQTPELDDLPIVVAVKKILYATDANESVLEEAQECLNQSLGLEGYEEEGKEEEEEEEEEEEEAAAAAETQT.

One can recognise a Calponin-homology (CH) domain in the interval phenylalanine 13–aspartate 115. Disordered stretches follow at residues glutamate 124–valine 188 and leucine 262–threonine 293. Positions valine 129–valine 141 are enriched in basic and acidic residues. The span at leucine 151–lysine 166 shows a compositional bias: polar residues. Residues glycine 180–valine 250 enclose the EB1 C-terminal domain. Residues glycine 266–alanine 285 are compositionally biased toward acidic residues.

This sequence belongs to the MAPRE family. As to quaternary structure, homodimer and heterodimer with EB1A. As to expression, highly expressed in guard cells of leaf stomata, pollen grains and pollen tubes. Expressed in young roots.

The protein localises to the cytoplasm. It localises to the cytoskeleton. The protein resides in the spindle pole. It is found in the phragmoplast. In terms of biological role, binds to the plus end of microtubules and regulates the dynamics of the microtubule cytoskeleton. May be involved in anchoring microtubules to their nucleation sites and/or functioning as a reservoir for distribution to the growing end. In plants, microtubule minus ends are not necessarily severed from the nucleation site and transported to the plus end of a microtubule as part of the recycling process. May play a role in endomembrane organization during polarized growth of plant cells. The polypeptide is Microtubule-associated protein RP/EB family member 1B (EB1B) (Arabidopsis thaliana (Mouse-ear cress)).